The sequence spans 93 residues: UPF0521 protein A (93 aa).

The stretch at 2–58 (SLKEVITSLKNDFHSINKEIDSMKENNEKQEDKIFQEIKKLKLEMELLRKDNLSFKT) forms a coiled coil.

The protein belongs to the UPF0521 family.

This chain is UPF0521 protein A, found in Dictyostelium discoideum (Social amoeba).